The following is a 496-amino-acid chain: MAGGGTTLEYTPTWVVALVCSVIVSISFAVERLIHRAGKHFKNNDQKQLFGALQKIKEELMLVGFISLLLSVGQSKIAKICISKELSEKFLPCTKPAGAEKSLKDSSHFQFSFTGRHLLAGDAPAGDYCSLKGKVPIMSLSALHELHIFIFVLAVAHIIFCLLTIVFGTMKIKQWKKWEDKVLEKDFDTDQSIKKFTHVQEHEFIRSRFLGVGKADASLGWVQSFMKQFLASVNESDYITMRLGFVTTHCKTNPKFNFHKYLMRALNSDFKKVVGISWYLWVFVVLFLLLNIVAWHVYFWLAFIPLILLLAVGTKLEHIITDLAHEVAEKHIAVEGDLVVRPSDDLFWFQSPRLVLFLIHFILFQNSFEIAYFFFILFQFGWDSCIMDHVKFVIPRLVIGVIIQLLCSYSTLPLYALVTQMGSSFKGAIFNEQTQEHLVGWAKMAKRGVKKGATQVGTSHDATSPRPSIQLNSLLGKGSSQQNQNPKEKSEIAHHD.

The Extracellular portion of the chain corresponds to 1–9 (MAGGGTTLE). A helical membrane pass occupies residues 10-30 (YTPTWVVALVCSVIVSISFAV). The Cytoplasmic portion of the chain corresponds to 31–59 (ERLIHRAGKHFKNNDQKQLFGALQKIKEE). Residues 60 to 80 (LMLVGFISLLLSVGQSKIAKI) form a helical membrane-spanning segment. At 81–147 (CISKELSEKF…MSLSALHELH (67 aa)) the chain is on the extracellular side. Residues 148–168 (IFIFVLAVAHIIFCLLTIVFG) form a helical membrane-spanning segment. Topologically, residues 169-269 (TMKIKQWKKW…KYLMRALNSD (101 aa)) are cytoplasmic. A helical membrane pass occupies residues 270-290 (FKKVVGISWYLWVFVVLFLLL). A topological domain (extracellular) is located at residue Asn-291. The chain crosses the membrane as a helical span at residues 292–312 (IVAWHVYFWLAFIPLILLLAV). Residues 313–355 (GTKLEHIITDLAHEVAEKHIAVEGDLVVRPSDDLFWFQSPRLV) are Cytoplasmic-facing. A helical transmembrane segment spans residues 356-376 (LFLIHFILFQNSFEIAYFFFI). The Extracellular portion of the chain corresponds to 377–397 (LFQFGWDSCIMDHVKFVIPRL). The chain crosses the membrane as a helical span at residues 398–418 (VIGVIIQLLCSYSTLPLYALV). The Cytoplasmic portion of the chain corresponds to 419-496 (TQMGSSFKGA…KEKSEIAHHD (78 aa)). The tract at residues 432 to 453 (EQTQEHLVGWAKMAKRGVKKGA) is calmodulin-binding. The disordered stretch occupies residues 454 to 496 (TQVGTSHDATSPRPSIQLNSLLGKGSSQQNQNPKEKSEIAHHD). Positions 455 to 485 (QVGTSHDATSPRPSIQLNSLLGKGSSQQNQN) are enriched in polar residues. A compositionally biased stretch (basic and acidic residues) spans 486 to 496 (PKEKSEIAHHD).

Belongs to the MLO family.

The protein localises to the membrane. Functionally, may be involved in modulation of pathogen defense and leaf cell death. Activity seems to be regulated by Ca(2+)-dependent calmodulin binding and seems not to require heterotrimeric G proteins. This Arabidopsis thaliana (Mouse-ear cress) protein is MLO-like protein 15 (MLO15).